The primary structure comprises 30 residues: Agglutinin alpha-1 chain (30 aa).

The Jacalin-type lectin domain occupies 1-30 (GVAFDDGSYTGIREINFEYNRETAIGGXQV).

The protein belongs to the jacalin lectin family. As to quaternary structure, tetramer of four alpha chains associated with two or four beta chains.

In terms of biological role, N-acetyl-galactosamine and D-galactose specific lectin. Binds the Tn-antigen structure GalNAc-alpha-1-O-Ser, the T-antigen structure Gal-beta1-3-GalNAc and IgA. This Morus nigra (Black mulberry) protein is Agglutinin alpha-1 chain.